Reading from the N-terminus, the 352-residue chain is CD5 antigen-like (352 aa).

The signal sequence occupies residues 1 to 21 (MAPLFNLMLAILSIFVGSCFS). SRCR domains are found at residues 27 to 128 (VQLV…AQCE), 141 to 241 (VRLV…MECE), and 246 to 348 (LKLV…VICT). Intrachain disulfides connect Cys36–Cys70, Cys52–Cys117, Cys65–Cys127, Cys98–Cys108, Cys166–Cys230, Cys179–Cys240, Cys211–Cys221, Cys255–Cys289, Cys271–Cys337, Cys284–Cys347, and Cys317–Cys327. Asn99 carries N-linked (GlcNAc...) asparagine glycosylation. An N-linked (GlcNAc...) asparagine glycan is attached at Asn229.

Interacts with FASN; the interaction is direct. Interacts (via SRCR2 and SRCR3) with pentameric IgM (via Fc region); disulfide-linked. Post-translationally, N-glycosylated. N-glycan at Asn-99 possesses only alpha2,6-sialylated terminals, while Asn-229 possesses both alpha2,6-sialylated and non-sialylated terminals. N-glycosylation increases secretion. As to expression, specifically expressed in tissue macrophages. Expressed in thymus, liver, spleen and lymph nodes. Present in Th17 cells; mainly present in non-pathogenic Th17 cells.

The protein localises to the secreted. It is found in the cytoplasm. In terms of biological role, secreted protein that acts as a key regulator of lipid synthesis: mainly expressed by macrophages in lymphoid and inflamed tissues and regulates mechanisms in inflammatory responses, such as infection or atherosclerosis. Able to inhibit lipid droplet size in adipocytes. Following incorporation into mature adipocytes via CD36-mediated endocytosis, associates with cytosolic FASN, inhibiting fatty acid synthase activity and leading to lipolysis, the degradation of triacylglycerols into glycerol and free fatty acids (FFA). CD5L-induced lipolysis occurs with progression of obesity: participates in obesity-associated inflammation following recruitment of inflammatory macrophages into adipose tissues, a cause of insulin resistance and obesity-related metabolic disease. Regulation of intracellular lipids mediated by CD5L has a direct effect on transcription regulation mediated by nuclear receptors ROR-gamma (RORC). Acts as a key regulator of metabolic switch in T-helper Th17 cells. Regulates the expression of pro-inflammatory genes in Th17 cells by altering the lipid content and limiting synthesis of cholesterol ligand of RORC, the master transcription factor of Th17-cell differentiation. CD5L is mainly present in non-pathogenic Th17 cells, where it decreases the content of polyunsaturated fatty acyls (PUFA), affecting two metabolic proteins MSMO1 and CYP51A1, which synthesize ligands of RORC, limiting RORC activity and expression of pro-inflammatory genes. Participates in obesity-associated autoimmunity via its association with IgM, interfering with the binding of IgM to Fcalpha/mu receptor and enhancing the development of long-lived plasma cells that produce high-affinity IgG autoantibodies. Also acts as an inhibitor of apoptosis in macrophages: promotes macrophage survival from the apoptotic effects of oxidized lipids in case of atherosclerosis. Involved in early response to microbial infection against various pathogens by acting as a pattern recognition receptor and by promoting autophagy. In Mus musculus (Mouse), this protein is CD5 antigen-like (Cd5l).